The following is a 227-amino-acid chain: Lipoprotein-releasing system ATP-binding protein LolD (227 aa).

Residues 7–227 (LRLERIGRAY…TLKDGRVVDL (221 aa)) enclose the ABC transporter domain. 43 to 50 (APSGAGKS) contacts ATP.

It belongs to the ABC transporter superfamily. Lipoprotein translocase (TC 3.A.1.125) family. As to quaternary structure, the complex is composed of two ATP-binding proteins (LolD) and two transmembrane proteins (LolC and LolE).

It localises to the cell inner membrane. Functionally, part of the ABC transporter complex LolCDE involved in the translocation of mature outer membrane-directed lipoproteins, from the inner membrane to the periplasmic chaperone, LolA. Responsible for the formation of the LolA-lipoprotein complex in an ATP-dependent manner. This chain is Lipoprotein-releasing system ATP-binding protein LolD, found in Brucella abortus biovar 1 (strain 9-941).